The sequence spans 345 residues: HTH-type transcriptional regulator reg1 (345 aa).

The 58-residue stretch at 1-58 (MTTRLADIAAQAGVSEATVSRVLNGKPGVAATTRQSVLAALDVLGYERPVRLRRRSAG) folds into the HTH lacI-type domain. Positions 5 to 24 (LADIAAQAGVSEATVSRVLN) form a DNA-binding region, H-T-H motif.

In terms of biological role, transcription repressor involved in control of expression of alpha-amylase and chitinase genes and of actinorhodin production. This Streptomyces lividans protein is HTH-type transcriptional regulator reg1 (reg1).